Here is a 256-residue protein sequence, read N- to C-terminus: MPAPLNTFKKSLSEGETLFGCWMSIAESYTAEILGNAGFDWLLIDGEHSPNDVRSIRDQMIALKSSDSHPIIRVPVGETWIIKQMLDLGAQTILVPMVETAEQAQELVRACRYPPEGRRGVGYAVGRASGFGQIDNYGPTADAQTCLLVQVENKTGLYNLDAILAVDGVDGVFIGPADLSASLGYLGQTMHPDIQATILKTIKRISDSGKAAGILTTDDGMIQASLDAGARFVAVAMDIAMLLNTGKSIAAKWKQG.

The active-site Proton acceptor is the histidine 48. A divalent metal cation-binding residues include glutamate 152 and aspartate 178.

This sequence belongs to the HpcH/HpaI aldolase family. A divalent metal cation is required as a cofactor.

It catalyses the reaction D-glyceraldehyde + pyruvate = 2-dehydro-3-deoxy-L-galactonate. Aldolase which can catalyze in vitro the aldolisation reaction between hydroxypyruvate (HPA) or pyruvate (PA) and D-glyceraldehyde (D-GA). The condensation of pyruvate and D-glyceraldehyde produces 2-dehydro-3-deoxy-L-galactonate as the major product. Has weak activity with hydroxypyruvate and D-glyceraldehyde. This chain is Hydroxypyruvate/pyruvate aldolase, found in Roseobacter denitrificans (strain ATCC 33942 / OCh 114) (Erythrobacter sp. (strain OCh 114)).